The primary structure comprises 179 residues: Protein GrpE (179 aa).

Over residues 1 to 14 (MSKKDKKEEIKEEV) the composition is skewed to basic and acidic residues. The tract at residues 1-40 (MSKKDKKEEIKEEVEATEPTTEESVEEVAEETSENKELQE) is disordered. Acidic residues predominate over residues 15–32 (EATEPTTEESVEEVAEET).

This sequence belongs to the GrpE family. Homodimer.

Its subcellular location is the cytoplasm. Participates actively in the response to hyperosmotic and heat shock by preventing the aggregation of stress-denatured proteins, in association with DnaK and GrpE. It is the nucleotide exchange factor for DnaK and may function as a thermosensor. Unfolded proteins bind initially to DnaJ; upon interaction with the DnaJ-bound protein, DnaK hydrolyzes its bound ATP, resulting in the formation of a stable complex. GrpE releases ADP from DnaK; ATP binding to DnaK triggers the release of the substrate protein, thus completing the reaction cycle. Several rounds of ATP-dependent interactions between DnaJ, DnaK and GrpE are required for fully efficient folding. In Streptococcus mutans serotype c (strain ATCC 700610 / UA159), this protein is Protein GrpE.